Reading from the N-terminus, the 339-residue chain is Annexin A2 (339 aa).

Ser-2 is modified (N-acetylserine). An S100A10-binding site region spans residues 2–24; sequence STVHEILCKLSLEGDHSTPPSAY. Tyr-24 carries the post-translational modification Phosphotyrosine; by SRC. Ser-26 carries the post-translational modification Phosphoserine; by PKC. Annexin repeat units follow at residues 33-104 and 105-176; these read FDAE…GLLK and TPAQ…ALAK. Lys-49 is subject to N6-acetyllysine; alternate. Lys-49 participates in a covalent cross-link: Glycyl lysine isopeptide (Lys-Gly) (interchain with G-Cter in SUMO1); alternate. A Glycyl lysine isopeptide (Lys-Gly) (interchain with G-Cter in SUMO2); alternate cross-link involves residue Lys-49. Lys-152 is modified (N6-acetyllysine). Ser-184 carries the phosphoserine modification. Annexin repeat units follow at residues 189–261 and 265–336; these read ELID…NLVQ and NKPL…YLCG. Position 199 is a phosphotyrosine (Tyr-199). At Lys-227 the chain carries N6-acetyllysine.

It belongs to the annexin family. Heterotetramer containing 2 light chains of S100A10/p11 and 2 heavy chains of ANXA2/p36. Interacts with ATP1B1. Interacts with DYSF. Interacts with COCH. Interacts (via repeat Annexin 1) with PCSK9 (via the C-terminal domain); the interaction inhibits the degradation of LDLR. Interacts with CEACAM1 (via the cytoplasmic domain); this interaction is regulated by phosphorylation of CEACAM1. Interacts with APPL2 and APPL1; targets APPL2 to endosomes and acting in parallel to RAB5A. Interacts with S100A4. May interact with UBAP2. Interacts with PLEKHG4B; this interaction is required for PLEKHG4B localization to cell-cell adhesions. ISGylated.

The protein localises to the secreted. It localises to the extracellular space. The protein resides in the extracellular matrix. It is found in the basement membrane. Its function is as follows. Calcium-regulated membrane-binding protein whose affinity for calcium is greatly enhanced by anionic phospholipids. It binds two calcium ions with high affinity. May be involved in heat-stress response. Inhibits PCSK9-enhanced LDLR degradation, probably reduces PCSK9 protein levels via a translational mechanism but also competes with LDLR for binding with PCSK9. Binds to endosomes damaged by phagocytosis of particulate wear debris and participates in endosomal membrane stabilization, thereby limiting NLRP3 inflammasome activation. Required for endothelial cell surface plasmin generation and may support fibrinolytic surveillance and neoangiogenesis. The protein is Annexin A2 (ANXA2) of Canis lupus familiaris (Dog).